A 69-amino-acid polypeptide reads, in one-letter code: DNA-directed RNA polymerase subunit omega (69 aa).

Belongs to the RNA polymerase subunit omega family. As to quaternary structure, the RNAP catalytic core consists of 2 alpha, 1 beta, 1 beta' and 1 omega subunit. When a sigma factor is associated with the core the holoenzyme is formed, which can initiate transcription.

It carries out the reaction RNA(n) + a ribonucleoside 5'-triphosphate = RNA(n+1) + diphosphate. Functionally, promotes RNA polymerase assembly. Latches the N- and C-terminal regions of the beta' subunit thereby facilitating its interaction with the beta and alpha subunits. In Geotalea uraniireducens (strain Rf4) (Geobacter uraniireducens), this protein is DNA-directed RNA polymerase subunit omega.